We begin with the raw amino-acid sequence, 744 residues long: ATP-dependent zinc metalloprotease FtsH (744 aa).

The Cytoplasmic segment spans residues 1-16 (MQDQNNSNTPKKKKLS). The chain crosses the membrane as a helical span at residues 17–37 (FWGIIGIVASILVLLVIAYII). Topologically, residues 38–177 (YYYVSQTTVL…ESIWSTVLRY (140 aa)) are extracellular. The helical transmembrane segment at 178–198 (GTNIIFLLLFAASFIFMFMSF) threads the bilayer. Over 199 to 744 (RSQRGTGGLL…EEKSKDEKNN (546 aa)) the chain is Cytoplasmic. 264–271 (GPPGTGKT) contacts ATP. Zn(2+) is bound at residue His-486. The active site involves Glu-487. The Zn(2+) site is built by His-490 and Asp-564. Positions 722–744 (IEANKSSSKSTVNEEKSKDEKNN) are disordered. Residues 733–744 (VNEEKSKDEKNN) show a composition bias toward basic and acidic residues.

It in the central section; belongs to the AAA ATPase family. The protein in the C-terminal section; belongs to the peptidase M41 family. As to quaternary structure, homohexamer. Requires Zn(2+) as cofactor.

Its subcellular location is the cell membrane. Functionally, acts as a processive, ATP-dependent zinc metallopeptidase for both cytoplasmic and membrane proteins. Plays a role in the quality control of integral membrane proteins. The sequence is that of ATP-dependent zinc metalloprotease FtsH from Metamycoplasma arthritidis (strain 158L3-1) (Mycoplasma arthritidis).